The sequence spans 321 residues: tRNA-dihydrouridine synthase B (321 aa).

FMN-binding positions include 16–18 (PMA) and Gln70. The Proton donor role is filled by Cys100. FMN is bound by residues Lys139, 200–202 (NGD), and 224–225 (GR).

The protein belongs to the Dus family. DusB subfamily. Requires FMN as cofactor.

It catalyses the reaction a 5,6-dihydrouridine in tRNA + NAD(+) = a uridine in tRNA + NADH + H(+). It carries out the reaction a 5,6-dihydrouridine in tRNA + NADP(+) = a uridine in tRNA + NADPH + H(+). Its function is as follows. Catalyzes the synthesis of 5,6-dihydrouridine (D), a modified base found in the D-loop of most tRNAs, via the reduction of the C5-C6 double bond in target uridines. The sequence is that of tRNA-dihydrouridine synthase B from Yersinia pestis.